We begin with the raw amino-acid sequence, 295 residues long: 4-diphosphocytidyl-2-C-methyl-D-erythritol kinase (295 aa).

Residue Lys-15 is part of the active site. Residue 101–111 (PIAAGLGGGSS) participates in ATP binding. Asp-143 is an active-site residue.

Belongs to the GHMP kinase family. IspE subfamily.

It catalyses the reaction 4-CDP-2-C-methyl-D-erythritol + ATP = 4-CDP-2-C-methyl-D-erythritol 2-phosphate + ADP + H(+). It functions in the pathway isoprenoid biosynthesis; isopentenyl diphosphate biosynthesis via DXP pathway; isopentenyl diphosphate from 1-deoxy-D-xylulose 5-phosphate: step 3/6. Functionally, catalyzes the phosphorylation of the position 2 hydroxy group of 4-diphosphocytidyl-2C-methyl-D-erythritol. In Caulobacter vibrioides (strain ATCC 19089 / CIP 103742 / CB 15) (Caulobacter crescentus), this protein is 4-diphosphocytidyl-2-C-methyl-D-erythritol kinase.